We begin with the raw amino-acid sequence, 400 residues long: Phosphoglycerate kinase (400 aa).

Substrate contacts are provided by residues 22–24, R38, 61–64, R120, and R153; these read DFN and HLGR. Residues K206, G297, E328, and 354 to 357 each bind ATP; that span reads GGDT.

Belongs to the phosphoglycerate kinase family. Monomer.

The protein localises to the cytoplasm. It catalyses the reaction (2R)-3-phosphoglycerate + ATP = (2R)-3-phospho-glyceroyl phosphate + ADP. It functions in the pathway carbohydrate degradation; glycolysis; pyruvate from D-glyceraldehyde 3-phosphate: step 2/5. The sequence is that of Phosphoglycerate kinase from Campylobacter curvus (strain 525.92).